Reading from the N-terminus, the 507-residue chain is Cytochrome P450 4X1 (507 aa).

Residues 14-34 form a helical membrane-spanning segment; the sequence is LHLALVFCLALVLMQAMKLYL. Cys452 lines the heme pocket.

The protein belongs to the cytochrome P450 family. Requires heme as cofactor. In terms of tissue distribution, expressed in brain and aorta. In the brain, expressed in the Purkinje cells of the cerebellum, pyramidal neurons in the dentate gyrus of the hippocampus, cortical forebrain neurons and those of brain stem nuclei (at protein level). In addition to neurons, also expressed in cerebral vascular endothelial cells (at protein level). Also expressed in epithelial cells of the choroid plexus (at protein level). Hardly detectable in heart, lung, kidney and spleen.

It is found in the endoplasmic reticulum membrane. The protein localises to the microsome membrane. The catalysed reaction is N-(5Z,8Z,11Z,14Z-eicosatetraenoyl)-ethanolamine + reduced [NADPH--hemoprotein reductase] + O2 = N-(14,15-epoxy-5Z,8Z,11Z-eicosatrienoyl)-ethanolamine + oxidized [NADPH--hemoprotein reductase] + H2O + H(+). In terms of biological role, a cytochrome P450 monooxygenase that selectively catalyzes the epoxidation of the last double bond of the arachidonoyl moiety of anandamide, potentially modulating endocannabinoid signaling. Has no hydroxylase activity toward various fatty acids, steroids and prostaglandins. Mechanistically, uses molecular oxygen inserting one oxygen atom into a substrate, and reducing the second into a water molecule, with two electrons provided by NADPH via cytochrome P450 reductase (CPR; NADPH-ferrihemoprotein reductase). The chain is Cytochrome P450 4X1 from Mus musculus (Mouse).